A 688-amino-acid polypeptide reads, in one-letter code: Sodium channel and clathrin linker 1 (688 aa).

The residue at position 2 (alanine 2) is an N-acetylalanine. Coiled coils occupy residues 59–108 (LIAE…AVEK) and 152–673 (QTAS…SVIT). Residue serine 681 is modified to Phosphoserine.

In terms of assembly, interacts with SCN10A and clathrin. Identified in a complex containing SCN10A, clathrin and SCLT1.

Its subcellular location is the cytoplasm. It is found in the cytoskeleton. It localises to the microtubule organizing center. The protein localises to the centrosome. The protein resides in the centriole. In terms of biological role, adapter protein that links SCN10A to clathrin. Regulates SCN10A channel activity, possibly by promoting channel internalization. This chain is Sodium channel and clathrin linker 1 (Sclt1), found in Mus musculus (Mouse).